Here is a 121-residue protein sequence, read N- to C-terminus: Small ribosomal subunit protein uS13 (121 aa).

The tract at residues 95-121 (LPVRGQNTKNNARTRKGKAVAIAGKKK) is disordered. Basic residues predominate over residues 106–121 (ARTRKGKAVAIAGKKK).

This sequence belongs to the universal ribosomal protein uS13 family. Part of the 30S ribosomal subunit. Forms a loose heterodimer with protein S19. Forms two bridges to the 50S subunit in the 70S ribosome.

Its function is as follows. Located at the top of the head of the 30S subunit, it contacts several helices of the 16S rRNA. In the 70S ribosome it contacts the 23S rRNA (bridge B1a) and protein L5 of the 50S subunit (bridge B1b), connecting the 2 subunits; these bridges are implicated in subunit movement. Contacts the tRNAs in the A and P-sites. The polypeptide is Small ribosomal subunit protein uS13 (Streptococcus thermophilus (strain CNRZ 1066)).